The sequence spans 217 residues: Adenylate kinase (217 aa).

11 to 16 provides a ligand contact to ATP; the sequence is GSGKGT. Residues 31–61 are NMP; the sequence is STGTMLRQALTRSTHKSYELHKNIMHTGDLV. AMP-binding positions include T32, R37, 59 to 61, 87 to 90, and Q94; these read DLV and GFPR. The LID stretch occupies residues 124–161; that stretch reads GRRIHVGSGRTYHIKFNPPRNYGLDDITGEILTTRKDD. ATP is bound by residues R125 and 134–135; that span reads TY. Residues R158 and R169 each contribute to the AMP site. R202 is a binding site for ATP.

It belongs to the adenylate kinase family. Monomer.

It is found in the cytoplasm. It catalyses the reaction AMP + ATP = 2 ADP. The protein operates within purine metabolism; AMP biosynthesis via salvage pathway; AMP from ADP: step 1/1. Catalyzes the reversible transfer of the terminal phosphate group between ATP and AMP. Plays an important role in cellular energy homeostasis and in adenine nucleotide metabolism. This Blochmanniella pennsylvanica (strain BPEN) protein is Adenylate kinase.